The primary structure comprises 122 residues: Large ribosomal subunit protein uL14 (122 aa).

Belongs to the universal ribosomal protein uL14 family. As to quaternary structure, part of the 50S ribosomal subunit. Forms a cluster with proteins L3 and L19. In the 70S ribosome, L14 and L19 interact and together make contacts with the 16S rRNA in bridges B5 and B8.

In terms of biological role, binds to 23S rRNA. Forms part of two intersubunit bridges in the 70S ribosome. The polypeptide is Large ribosomal subunit protein uL14 (Corynebacterium efficiens (strain DSM 44549 / YS-314 / AJ 12310 / JCM 11189 / NBRC 100395)).